Reading from the N-terminus, the 387-residue chain is Protein-glutamate methylesterase/protein-glutamine glutaminase 1 (387 aa).

One can recognise a Response regulatory domain in the interval 18–136; that stretch reads RVMVVDDSAV…EISGGTDFRH (119 aa). Asp69 is subject to 4-aspartylphosphate. In terms of domain architecture, CheB-type methylesterase spans 190–387; it reads PAAEERPDII…AYVLRSANKR (198 aa). Catalysis depends on residues Ser204, His233, and Asp329.

Belongs to the CheB family. Post-translationally, phosphorylated by CheA. Phosphorylation of the N-terminal regulatory domain activates the methylesterase activity.

The protein resides in the cytoplasm. It carries out the reaction [protein]-L-glutamate 5-O-methyl ester + H2O = L-glutamyl-[protein] + methanol + H(+). The enzyme catalyses L-glutaminyl-[protein] + H2O = L-glutamyl-[protein] + NH4(+). Functionally, involved in chemotaxis. Part of a chemotaxis signal transduction system that modulates chemotaxis in response to various stimuli. Catalyzes the demethylation of specific methylglutamate residues introduced into the chemoreceptors (methyl-accepting chemotaxis proteins or MCP) by CheR. Also mediates the irreversible deamidation of specific glutamine residues to glutamic acid. The protein is Protein-glutamate methylesterase/protein-glutamine glutaminase 1 of Rhodospirillum rubrum (strain ATCC 11170 / ATH 1.1.1 / DSM 467 / LMG 4362 / NCIMB 8255 / S1).